The primary structure comprises 518 residues: U3 small nucleolar RNA-associated protein 15 homolog (518 aa).

Residue Ala2 is modified to N-acetylalanine. WD repeat units lie at residues 36 to 75 (KEFG…PIKT), 78 to 117 (RFKD…PLRQ), 120 to 159 (GHTK…EILT), 162 to 202 (EHSD…SVLS), 204 to 242 (EHGQ…QLLV), 246 to 285 (NHHK…VVHS), and 287 to 326 (DYAA…KKES). Residue Lys249 forms a Glycyl lysine isopeptide (Lys-Gly) (interchain with G-Cter in SUMO2) linkage.

Part of the small subunit (SSU) processome, composed of more than 70 proteins and the RNA chaperone small nucleolar RNA (snoRNA) U3. May be a component of the proposed t-UTP subcomplex of the ribosomal small subunit (SSU) processome containing at least UTP4, WDR43, HEATR1, UTP15, WDR75. Interacts directly with UTP4 and WDR43.

The protein localises to the nucleus. It is found in the nucleolus. Its function is as follows. Ribosome biogenesis factor. Involved in nucleolar processing of pre-18S ribosomal RNA. Required for optimal pre-ribosomal RNA transcription by RNA polymerase I. Part of the small subunit (SSU) processome, first precursor of the small eukaryotic ribosomal subunit. During the assembly of the SSU processome in the nucleolus, many ribosome biogenesis factors, an RNA chaperone and ribosomal proteins associate with the nascent pre-rRNA and work in concert to generate RNA folding, modifications, rearrangements and cleavage as well as targeted degradation of pre-ribosomal RNA by the RNA exosome. This is U3 small nucleolar RNA-associated protein 15 homolog from Homo sapiens (Human).